Here is a 275-residue protein sequence, read N- to C-terminus: Large ribosomal subunit protein uL2cz/uL2cy (275 aa).

Disordered regions lie at residues 1–26 (MAIH…VKSN) and 224–275 (MNPV…RRTK). Polar residues predominate over residues 7–26 (KTSTPSTRNGTVDSRQVKSN).

Belongs to the universal ribosomal protein uL2 family. In terms of assembly, part of the 50S ribosomal subunit.

The protein resides in the plastid. It localises to the chloroplast. In Phaseolus angularis (Azuki bean), this protein is Large ribosomal subunit protein uL2cz/uL2cy (rpl2-A).